The primary structure comprises 95 residues: uncharacterized protein (95 aa).

This is an uncharacterized protein from Caenorhabditis elegans.